A 139-amino-acid chain; its full sequence is MNWNQIIFISLIATVLILAIANEAESAAVRTDKSDIKREDGENMKKRIFMQESEATAFLKRRGRRSTKSKDEVNAENRQRLAADERRREYYEEQRNEFENYVEEERDEQQERNREKTEQWREYHYDGLYPSYQYNRHHI.

Residues 1–26 form the signal peptide; it reads MNWNQIIFISLIATVLILAIANEAES. Positions 27 to 65 are cleaved as a propeptide — ucma-N; it reads AAVRTDKSDIKREDGENMKKRIFMQESEATAFLKRRGRR. The tract at residues 60 to 117 is disordered; sequence KRRGRRSTKSKDEVNAENRQRLAADERRREYYEEQRNEFENYVEEERDEQQERNREKT. A compositionally biased stretch (basic and acidic residues) spans 68–98; it reads KSKDEVNAENRQRLAADERRREYYEEQRNEF. Residues 70–123 are a coiled coil; it reads KDEVNAENRQRLAADERRREYYEEQRNEFENYVEEERDEQQERNREKTEQWREY. 16 positions are modified to 4-carboxyglutamate: Glu-72, Glu-76, Glu-85, Glu-89, Glu-92, Glu-93, Glu-97, Glu-99, Glu-103, Glu-104, Glu-105, Glu-108, Glu-111, Glu-115, Glu-118, and Glu-122.

This sequence belongs to the UCMA family. Proteolytically cleaved by a furin-like convertase to generate a persistent C-terminal fragment found in almost the entire cartilage matrix, and affecting osteoblast differentiation. In terms of processing, sulfated on tyrosine residues. Detected in all tissues tested: heart, liver, kidney, muscle, gonads, brain, ganoid plate, anterior kidney, spleen, spine, cleithrum, head plate, operculum, skull, mandibula, branchial arches, anterior vertebra, and posterior vertebra. Expression is highest in the cartilaginous tissues (skull, mandibula, branchial arches, anterior vertebra and posterior vertebra), with the highest levels found in posterior vertebra. Found in mature and immature chondrocytes within the vertebra and mandibula, and in the chordoblast layer of the notochord in vertebra.

The protein resides in the secreted. It localises to the extracellular space. The protein localises to the extracellular matrix. May be involved in the negative control of osteogenic differentiation of osteochondrogenic precursor cells in peripheral zones of fetal cartilage and at the cartilage-bone interface. This chain is Unique cartilage matrix-associated protein (ucma), found in Acipenser naccarii (Adriatic sturgeon).